Reading from the N-terminus, the 664-residue chain is Protein cueball (664 aa).

Positions 1 to 21 (MRNLGIAVTFAVLLVIGYVTA) are cleaved as a signal peptide. The Extracellular portion of the chain corresponds to 22–552 (LEWDAVVTTD…VTYCKNSFNR (531 aa)). N-linked (GlcNAc...) asparagine glycosylation is found at Asn-40, Asn-140, and Asn-188. LDL-receptor class B repeat units lie at residues 115–157 (RKLY…ENHD), 168–211 (RHLY…DHYN), and 212–257 (NRIY…NSQY). EGF-like domains are found at residues 367–399 (EIPI…FEGE), 402–438 (DRNI…ARCE), and 473–510 (EEYT…KRCE). Cystine bridges form between Cys-371-Cys-380, Cys-375-Cys-390, Cys-406-Cys-416, Cys-410-Cys-426, Cys-428-Cys-437, Cys-477-Cys-487, Cys-481-Cys-498, and Cys-500-Cys-509. An N-linked (GlcNAc...) asparagine glycan is attached at Asn-431. Asn-491 carries an N-linked (GlcNAc...) asparagine glycan. An N-linked (GlcNAc...) asparagine glycan is attached at Asn-551. A helical transmembrane segment spans residues 553–573 (TVVYVSLAFTASLVTLVTILC). Topologically, residues 574–664 (TVRRMYERNR…KLPSCVAEKN (91 aa)) are cytoplasmic.

The protein belongs to the cueball family.

It localises to the cell membrane. In terms of biological role, has a role in spermatogenesis and oogenesis. The sequence is that of Protein cueball from Aedes aegypti (Yellowfever mosquito).